The following is a 291-amino-acid chain: ATP synthase gamma chain (291 aa).

The protein belongs to the ATPase gamma chain family. In terms of assembly, F-type ATPases have 2 components, CF(1) - the catalytic core - and CF(0) - the membrane proton channel. CF(1) has five subunits: alpha(3), beta(3), gamma(1), delta(1), epsilon(1). CF(0) has three main subunits: a, b and c.

It is found in the cell inner membrane. In terms of biological role, produces ATP from ADP in the presence of a proton gradient across the membrane. The gamma chain is believed to be important in regulating ATPase activity and the flow of protons through the CF(0) complex. The protein is ATP synthase gamma chain of Sinorhizobium medicae (strain WSM419) (Ensifer medicae).